We begin with the raw amino-acid sequence, 243 residues long: R-spondin-2 (243 aa).

The signal sequence occupies residues 1-23; sequence MRFCLFSFALIILNCMDYSQCQG. Cystine bridges form between Cys-40–Cys-46, Cys-43–Cys-52, Cys-55–Cys-74, Cys-78–Cys-93, Cys-96–Cys-104, Cys-101–Cys-110, Cys-113–Cys-124, Cys-128–Cys-141, Cys-145–Cys-187, Cys-156–Cys-163, and Cys-196–Cys-203. The stretch at 90 to 134 is one FU repeat; sequence MNRCARCRIENCDSCFSKDFCTKCKVGFYLHRGRCFDECPDGFAP. The 61-residue stretch at 144–204 folds into the TSP type-1 domain; sequence GCEVGHWSEW…RCKMAMRHCP (61 aa). Asn-160 carries N-linked (GlcNAc...) asparagine glycosylation. The span at 204–224 shows a compositional bias: basic residues; it reads PGGKRTPKAKEKRNKKKRRKL. Residues 204 to 243 form a disordered region; sequence PGGKRTPKAKEKRNKKKRRKLIERAQEQHSVFLATDRVNQ.

The protein belongs to the R-spondin family. Interacts with WNT1. Binds heparin. Interacts with LGR4, LGR5 and LGR6.

The protein localises to the secreted. Activator of the canonical Wnt signaling pathway by acting as a ligand for LGR4-6 receptors. Upon binding to LGR4-6 (LGR4, LGR5 or LGR6), LGR4-6 associate with phosphorylated LRP6 and frizzled receptors that are activated by extracellular Wnt receptors, triggering the canonical Wnt signaling pathway to increase expression of target genes. Also regulates the canonical Wnt/beta-catenin-dependent pathway and non-canonical Wnt signaling by acting as an inhibitor of ZNRF3, an important regulator of the Wnt signaling pathway. Probably also acts as a ligand for frizzled and LRP receptors. During embryonic development, plays a crucial role in limb specification, amplifying the Wnt signaling pathway independently of LGR4-6 receptors, possibly by acting as a direct antagonistic ligand to RNF43 and ZNRF3, hence governing the number of limbs an embryo should form. The chain is R-spondin-2 (Rspo2) from Mus musculus (Mouse).